The following is a 36-amino-acid chain: DKCSPSGAICSGFGPPEQCCSGACVPHPILRIFVCQ.

3 disulfides stabilise this stretch: cysteine 3–cysteine 20, cysteine 10–cysteine 24, and cysteine 19–cysteine 35.

Its function is as follows. Trypsin inhibitor. The polypeptide is Trypsin inhibitor 2 (Spinacia oleracea (Spinach)).